The chain runs to 496 residues: Rhamnulokinase (496 aa).

13–17 (ASSGR) provides a ligand contact to ATP. Residues G83 and 236 to 238 (HDT) contribute to the substrate site. D237 (proton acceptor) is an active-site residue. T259 contacts ATP. Substrate is bound at residue N296. ATP is bound at residue Q304. Residues C353 and C370 are joined by a disulfide bond. G402 provides a ligand contact to ATP. An intrachain disulfide couples C413 to C417.

This sequence belongs to the rhamnulokinase family. Requires Mg(2+) as cofactor.

The catalysed reaction is L-rhamnulose + ATP = L-rhamnulose 1-phosphate + ADP + H(+). The protein operates within carbohydrate degradation; L-rhamnose degradation; glycerone phosphate from L-rhamnose: step 2/3. In terms of biological role, involved in the catabolism of L-rhamnose (6-deoxy-L-mannose). Catalyzes the transfer of the gamma-phosphate group from ATP to the 1-hydroxyl group of L-rhamnulose to yield L-rhamnulose 1-phosphate. The protein is Rhamnulokinase of Pectobacterium carotovorum subsp. carotovorum (strain PC1).